Consider the following 49-residue polypeptide: Splenin (49 aa).

In terms of domain architecture, LEM-like spans 4 to 47; it reads LEDPSVLTKEKLKSELVANNVTLPAGEQRKEVYVELYLQHLTAL. The segment at 32 to 36 is essential for biological activity; sequence RKEVY.

Belongs to the thymopoietin family.

Functionally, hormone of the spleen with pleiotropic actions on prothymocytes, mature T-cells, the nicotinic acetylcholine receptor, and pituitary corticotrophs. This is Splenin (SP) from Bos taurus (Bovine).